Reading from the N-terminus, the 104-residue chain is Small ribosomal subunit protein bS16 (104 aa).

It belongs to the bacterial ribosomal protein bS16 family.

In Gemmatimonas aurantiaca (strain DSM 14586 / JCM 11422 / NBRC 100505 / T-27), this protein is Small ribosomal subunit protein bS16.